We begin with the raw amino-acid sequence, 339 residues long: Ketol-acid reductoisomerase (NADP(+)) (339 aa).

In terms of domain architecture, KARI N-terminal Rossmann spans 1–182 (MRVYYDRDAD…GGGRAGIIET (182 aa)). NADP(+) contacts are provided by residues 24–27 (YGSQ), Arg48, Ser51, Ser53, and 83–86 (DELQ). His108 is an active-site residue. Gly134 lines the NADP(+) pocket. In terms of domain architecture, KARI C-terminal knotted spans 183–328 (TFKEECETDL…ERLRGMMPWI (146 aa)). Mg(2+) contacts are provided by Asp191, Glu195, Glu227, and Glu231. Ser252 is a binding site for substrate.

It belongs to the ketol-acid reductoisomerase family. Requires Mg(2+) as cofactor.

The enzyme catalyses (2R)-2,3-dihydroxy-3-methylbutanoate + NADP(+) = (2S)-2-acetolactate + NADPH + H(+). The catalysed reaction is (2R,3R)-2,3-dihydroxy-3-methylpentanoate + NADP(+) = (S)-2-ethyl-2-hydroxy-3-oxobutanoate + NADPH + H(+). It participates in amino-acid biosynthesis; L-isoleucine biosynthesis; L-isoleucine from 2-oxobutanoate: step 2/4. Its pathway is amino-acid biosynthesis; L-valine biosynthesis; L-valine from pyruvate: step 2/4. Its function is as follows. Involved in the biosynthesis of branched-chain amino acids (BCAA). Catalyzes an alkyl-migration followed by a ketol-acid reduction of (S)-2-acetolactate (S2AL) to yield (R)-2,3-dihydroxy-isovalerate. In the isomerase reaction, S2AL is rearranged via a Mg-dependent methyl migration to produce 3-hydroxy-3-methyl-2-ketobutyrate (HMKB). In the reductase reaction, this 2-ketoacid undergoes a metal-dependent reduction by NADPH to yield (R)-2,3-dihydroxy-isovalerate. The protein is Ketol-acid reductoisomerase (NADP(+)) of Methylobacterium sp. (strain 4-46).